Consider the following 322-residue polypeptide: Beta-ketoacyl-[acyl-carrier-protein] synthase III (322 aa).

Active-site residues include Cys-113 and His-249. Residues 250–254 (QANVR) are ACP-binding. The active site involves Asn-279.

The protein belongs to the thiolase-like superfamily. FabH family. In terms of assembly, homodimer.

It is found in the cytoplasm. The enzyme catalyses malonyl-[ACP] + acetyl-CoA + H(+) = 3-oxobutanoyl-[ACP] + CO2 + CoA. Its pathway is lipid metabolism; fatty acid biosynthesis. Functionally, catalyzes the condensation reaction of fatty acid synthesis by the addition to an acyl acceptor of two carbons from malonyl-ACP. Catalyzes the first condensation reaction which initiates fatty acid synthesis and may therefore play a role in governing the total rate of fatty acid production. Possesses both acetoacetyl-ACP synthase and acetyl transacylase activities. Its substrate specificity determines the biosynthesis of branched-chain and/or straight-chain of fatty acids. This chain is Beta-ketoacyl-[acyl-carrier-protein] synthase III, found in Anaplasma marginale (strain St. Maries).